The chain runs to 173 residues: Large ribosomal subunit protein bL9 (173 aa).

The protein belongs to the bacterial ribosomal protein bL9 family.

Its function is as follows. Binds to the 23S rRNA. This is Large ribosomal subunit protein bL9 from Rickettsia bellii (strain OSU 85-389).